The chain runs to 169 residues: Peptide methionine sulfoxide reductase MsrA 1 (169 aa).

Cys12 is a catalytic residue.

This sequence belongs to the MsrA Met sulfoxide reductase family.

The catalysed reaction is L-methionyl-[protein] + [thioredoxin]-disulfide + H2O = L-methionyl-(S)-S-oxide-[protein] + [thioredoxin]-dithiol. It catalyses the reaction [thioredoxin]-disulfide + L-methionine + H2O = L-methionine (S)-S-oxide + [thioredoxin]-dithiol. Has an important function as a repair enzyme for proteins that have been inactivated by oxidation. Catalyzes the reversible oxidation-reduction of methionine sulfoxide in proteins to methionine. The protein is Peptide methionine sulfoxide reductase MsrA 1 (msrA1) of Staphylococcus aureus (strain Mu50 / ATCC 700699).